A 402-amino-acid polypeptide reads, in one-letter code: UDP-glucose 6-dehydrogenase (402 aa).

Residues 2-19, Val-11, Asp-29, Lys-34, Thr-83, Thr-118, and Glu-145 contribute to the NAD(+) site; that span reads KIAV…GVLL. Residues 141 to 145, Lys-204, Asn-208, 249 to 253, and Gly-257 contribute to the substrate site; these read EFLRE and YNNPS. Residue Tyr-259 coordinates NAD(+). Cys-260 acts as the Nucleophile in catalysis. Residue Lys-263 participates in NAD(+) binding. Lys-320 contacts substrate. Arg-327 contacts NAD(+).

This sequence belongs to the UDP-glucose/GDP-mannose dehydrogenase family.

The enzyme catalyses UDP-alpha-D-glucose + 2 NAD(+) + H2O = UDP-alpha-D-glucuronate + 2 NADH + 3 H(+). The protein operates within nucleotide-sugar biosynthesis; UDP-alpha-D-glucuronate biosynthesis; UDP-alpha-D-glucuronate from UDP-alpha-D-glucose: step 1/1. In terms of biological role, catalyzes the formation of UDP-glucuronic acid which is required for capsular hyaluronic acid synthesis. The protein is UDP-glucose 6-dehydrogenase (hasB) of Streptococcus pyogenes serotype M1.